We begin with the raw amino-acid sequence, 437 residues long: Trigger factor (437 aa).

One can recognise a PPIase FKBP-type domain in the interval 174 to 260 (GDFVQISFEG…VKSLKKKIFP (87 aa)).

Belongs to the FKBP-type PPIase family. Tig subfamily.

The protein localises to the cytoplasm. It carries out the reaction [protein]-peptidylproline (omega=180) = [protein]-peptidylproline (omega=0). Involved in protein export. Acts as a chaperone by maintaining the newly synthesized protein in an open conformation. Functions as a peptidyl-prolyl cis-trans isomerase. This Koribacter versatilis (strain Ellin345) protein is Trigger factor.